A 202-amino-acid polypeptide reads, in one-letter code: Sterile alpha motif domain-containing protein 10 (202 aa).

The 67-residue stretch at 118-184 folds into the SAM domain; sequence WSQQDVCKWL…LQQVLRLQVR (67 aa).

The chain is Sterile alpha motif domain-containing protein 10 (SAMD10) from Homo sapiens (Human).